The primary structure comprises 172 residues: MNQSLTPSAGTDSKTGSSKAISFQDYLDLSTLDWARLRAILAPALYVDYTKIGKEKWDAMSADDFMAMVSNDDFLGDPCVKTQHLIGATYWERVSESKVIGHHQLRAAHQVYTSPDLKTVKLRGHSHATNEHYYVKSSGVWKFAGLKPEVRWNEYKFEEVFKGSYTQSEKHS.

Y49 is a substrate binding site. Active-site residues include H84 and H109. N130 contributes to the substrate binding site.

This sequence belongs to the scytalone dehydratase family. As to quaternary structure, homotrimer. Each subunit contains an active site, located in the central part of the hydrophobic core of the monomer, which functions independently.

Functionally, scytalone dehydratase-like protein; part of the Pks2 gene cluster that mediates the formation of infectious structures (appressoria), enabling these fungi to kill insects faster. The product of the Pks2 gene cluster is different from the one of Pks1 and has still not been identified. The protein is Scytalone dehydratase-like protein Arp1 of Metarhizium robertsii (strain ARSEF 23 / ATCC MYA-3075) (Metarhizium anisopliae (strain ARSEF 23)).